The following is a 460-amino-acid chain: 5-hydroxytryptamine receptor 2C (460 aa).

The first 32 residues, 1-32 (MVNLGNAVRSLLMHLIGLLVWQFDISISPVAA), serve as a signal peptide directing secretion. Over 33–56 (IVTDTFNSSDGGRLFQFPDGVQNW) the chain is Extracellular. Residues 57 to 81 (PALSIVVIIIMTIGGNILVIMAVSM) traverse the membrane as a helical segment. The Cytoplasmic portion of the chain corresponds to 82–87 (EKKLHN). Residues 88-112 (ATNYFLMSLAIADMLVGLLVMPLSL) traverse the membrane as a helical segment. Over 113-129 (LAILYDYVWPLPRYLCP) the chain is Extracellular. C128 and C208 are disulfide-bonded. The chain crosses the membrane as a helical span at residues 130–152 (VWISLDVLFSTASIMHLCAISLD). T140 lines the ergotamine pocket. Residues 152-154 (DRY) carry the DRY motif; important for ligand-induced conformation changes motif. Over 153–168 (RYVAIRNPIEHSRFNS) the chain is Cytoplasmic. A helical membrane pass occupies residues 169–190 (RTKAIMKIAIVWAISIGVSVPI). Residues 191-214 (PVIGLRDESKVFVNNTTCVLNDPN) are Extracellular-facing. N-linked (GlcNAc...) asparagine glycosylation is found at N204 and N205. Residue L210 coordinates ergotamine. A helical membrane pass occupies residues 215-237 (FVLIGSFVAFFIPLTIMVITYFL). Topologically, residues 238–313 (TIYVLRRQTL…AINNEKKASK (76 aa)) are cytoplasmic. Residues 276–301 (EEENAPNPNPDQKPRRKKKEKRPRGT) form a disordered region. Residues 289 to 299 (PRRKKKEKRPR) are compositionally biased toward basic residues. A helical membrane pass occupies residues 314–338 (VLGIVFFVFLIMWCPFFITNILSVL). A disulfide bond links C339 and C343. Residues 339-349 (CGKACNQKLME) lie on the Extracellular side of the membrane. Residues 350–372 (KLLNVFVWIGYVCSGINPLVYTL) traverse the membrane as a helical segment. The NPxxY motif; important for ligand-induced conformation changes and signaling signature appears at 366–370 (NPLVY). At 373-460 (FNKIYRRAFS…NVVSERISSV (88 aa)) the chain is on the cytoplasmic side. The PDZ-binding motif lies at 458 to 460 (SSV).

This sequence belongs to the G-protein coupled receptor 1 family. In terms of assembly, interacts with MPDZ. Interacts with ARRB2. Interacts with MPP3; this interaction stabilizes the receptor at the plasma membrane and prevents the desensitization of the HTR2C receptor-mediated calcium response.

The protein resides in the cell membrane. Its function is as follows. G-protein coupled receptor for 5-hydroxytryptamine (serotonin). Also functions as a receptor for various drugs and psychoactive substances, including ergot alkaloid derivatives, 1-2,5,-dimethoxy-4-iodophenyl-2-aminopropane (DOI) and lysergic acid diethylamide (LSD). Ligand binding causes a conformation change that triggers signaling via guanine nucleotide-binding proteins (G proteins) and modulates the activity of downstream effectors. HTR2C is coupled to G(q)/G(11) G alpha proteins and activates phospholipase C-beta, releasing diacylglycerol (DAG) and inositol 1,4,5-trisphosphate (IP3) second messengers that modulate the activity of phosphatidylinositol 3-kinase and promote the release of Ca(2+) ions from intracellular stores, respectively. Beta-arrestin family members inhibit signaling via G proteins and mediate activation of alternative signaling pathways. Regulates neuronal activity via the activation of short transient receptor potential calcium channels in the brain, and thereby modulates the activation of pro-opiomelanocortin neurons and the release of CRH that then regulates the release of corticosterone. Plays a role in the regulation of appetite and eating behavior, responses to anxiogenic stimuli and stress. Plays a role in insulin sensitivity and glucose homeostasis. In Rattus norvegicus (Rat), this protein is 5-hydroxytryptamine receptor 2C.